A 652-amino-acid chain; its full sequence is Acetyl-coenzyme A synthetase (652 aa).

CoA is bound by residues 191 to 194 (RAGR), Thr-311, and Asn-335. Residues 387-389 (GEP), 411-416 (DTWWQT), Asp-500, and Arg-515 each bind ATP. CoA is bound at residue Ser-523. An ATP-binding site is contributed by Arg-526. Mg(2+) is bound by residues Val-537, His-539, and Ile-542. Arg-584 contacts CoA. Residue Lys-609 is modified to N6-acetyllysine.

Belongs to the ATP-dependent AMP-binding enzyme family. The cofactor is Mg(2+). In terms of processing, acetylated. Deacetylation by the SIR2-homolog deacetylase activates the enzyme.

It carries out the reaction acetate + ATP + CoA = acetyl-CoA + AMP + diphosphate. Catalyzes the conversion of acetate into acetyl-CoA (AcCoA), an essential intermediate at the junction of anabolic and catabolic pathways. Acs undergoes a two-step reaction. In the first half reaction, Acs combines acetate with ATP to form acetyl-adenylate (AcAMP) intermediate. In the second half reaction, it can then transfer the acetyl group from AcAMP to the sulfhydryl group of CoA, forming the product AcCoA. Its function is as follows. Enables the cell to use acetate during aerobic growth to generate energy via the TCA cycle, and biosynthetic compounds via the glyoxylate shunt. Acetylates CheY, the response regulator involved in flagellar movement and chemotaxis. The protein is Acetyl-coenzyme A synthetase of Serratia proteamaculans (strain 568).